Consider the following 352-residue polypeptide: Coproporphyrin III ferrochelatase (352 aa).

Fe-coproporphyrin III contacts are provided by Ser-52 and Tyr-121. Residues His-178 and Glu-267 each contribute to the Fe(2+) site.

This sequence belongs to the ferrochelatase family.

It localises to the cytoplasm. The enzyme catalyses Fe-coproporphyrin III + 2 H(+) = coproporphyrin III + Fe(2+). The protein operates within porphyrin-containing compound metabolism; protoheme biosynthesis. In terms of biological role, involved in coproporphyrin-dependent heme b biosynthesis. Catalyzes the insertion of ferrous iron into coproporphyrin III to form Fe-coproporphyrin III. The polypeptide is Coproporphyrin III ferrochelatase (Propionibacterium freudenreichii subsp. freudenreichii).